The sequence spans 299 residues: Acetylglutamate kinase (299 aa).

Substrate contacts are provided by residues 70–71 (GG), Arg-92, and Asn-186.

Belongs to the acetylglutamate kinase family. ArgB subfamily.

The protein localises to the cytoplasm. The catalysed reaction is N-acetyl-L-glutamate + ATP = N-acetyl-L-glutamyl 5-phosphate + ADP. The protein operates within amino-acid biosynthesis; L-arginine biosynthesis; N(2)-acetyl-L-ornithine from L-glutamate: step 2/4. In terms of biological role, catalyzes the ATP-dependent phosphorylation of N-acetyl-L-glutamate. In Thermoanaerobacter pseudethanolicus (strain ATCC 33223 / 39E) (Clostridium thermohydrosulfuricum), this protein is Acetylglutamate kinase.